The sequence spans 138 residues: Transcription antitermination protein NusB (138 aa).

Belongs to the NusB family.

Its function is as follows. Involved in transcription antitermination. Required for transcription of ribosomal RNA (rRNA) genes. Binds specifically to the boxA antiterminator sequence of the ribosomal RNA (rrn) operons. This is Transcription antitermination protein NusB from Helicobacter pylori (strain P12).